The primary structure comprises 471 residues: Uronate isomerase (471 aa).

It belongs to the metallo-dependent hydrolases superfamily. Uronate isomerase family.

The enzyme catalyses D-glucuronate = D-fructuronate. The catalysed reaction is aldehydo-D-galacturonate = keto-D-tagaturonate. Its pathway is carbohydrate metabolism; pentose and glucuronate interconversion. This is Uronate isomerase from Xanthomonas campestris pv. campestris (strain B100).